An 88-amino-acid chain; its full sequence is Small ribosomal subunit protein uS17 (88 aa).

Belongs to the universal ribosomal protein uS17 family. Part of the 30S ribosomal subunit.

Functionally, one of the primary rRNA binding proteins, it binds specifically to the 5'-end of 16S ribosomal RNA. The sequence is that of Small ribosomal subunit protein uS17 from Prochlorococcus marinus (strain NATL1A).